The chain runs to 93 residues: UPF0058 protein AF_0738 (93 aa).

Belongs to the UPF0058 family.

This Archaeoglobus fulgidus (strain ATCC 49558 / DSM 4304 / JCM 9628 / NBRC 100126 / VC-16) protein is UPF0058 protein AF_0738.